Here is a 32-residue protein sequence, read N- to C-terminus: Trypsin inhibitor 4 (32 aa).

3 cysteine pairs are disulfide-bonded: Cys-6–Cys-23, Cys-13–Cys-25, and Cys-19–Cys-31.

Belongs to the protease inhibitor I7 (squash-type serine protease inhibitor) family.

The protein resides in the secreted. Inhibits trypsin. This Cucurbita maxima (Pumpkin) protein is Trypsin inhibitor 4.